Reading from the N-terminus, the 163-residue chain is Transcription elongation factor GreA (163 aa).

A coiled-coil region spans residues 11–38; it reads FKQLEKELDRLKKERPGVIQAIKEAREE.

The protein belongs to the GreA/GreB family.

In terms of biological role, necessary for efficient RNA polymerase transcription elongation past template-encoded arresting sites. The arresting sites in DNA have the property of trapping a certain fraction of elongating RNA polymerases that pass through, resulting in locked ternary complexes. Cleavage of the nascent transcript by cleavage factors such as GreA or GreB allows the resumption of elongation from the new 3'terminus. GreA releases sequences of 2 to 3 nucleotides. This is Transcription elongation factor GreA from Nitratidesulfovibrio vulgaris (strain ATCC 29579 / DSM 644 / CCUG 34227 / NCIMB 8303 / VKM B-1760 / Hildenborough) (Desulfovibrio vulgaris).